The following is a 6548-amino-acid chain: Epiplakin (6548 aa).

A Phosphothreonine modification is found at T33. Plectin repeat units lie at residues 41-78 (AALP…TGLG), 79-116 (LTLL…LELK), 117-154 (EKLL…RTLG), 155-192 (WRLL…KETW), 285-322 (RRYL…KGIA), 323-360 (LQLL…PELH), 362-398 (QLLV…QPLA), 399-436 (LRLL…EETR), and 437-470 (QRLS…PETG). The interaction with KRT5 stretch occupies residues 49–1123 (SIAGVYVEAS…KASGLHLLPL (1075 aa)). A coiled-coil region spans residues 545 to 565 (SVEELAAELKNIVEQAAATAK). 5 Plectin repeats span residues 611 to 648 (QRYL…PGTA), 649 to 686 (LILL…PDVY), 687 to 724 (AKLL…RDHG), 725 to 762 (IRLL…QILN), and 766 to 800 (LDPS…SETG). Positions 851–886 (TEDRRRQLLQRYRQRKITLEQVTQLLEKEMRRWTDI) form a coiled coil. 8 Plectin repeats span residues 931–968 (HRYL…PSTA), 969–1006 (LALL…AEVY), 1007–1044 (GKLK…VEQA), 1224–1284 (QETL…TGLG), 1285–1322 (QQLL…MEQS), 1323–1360 (EHLR…QSEA), 1361–1398 (FPLL…EQTS), and 1402–1436 (TATG…ADTG). T1551 is subject to Phosphothreonine. 5 Plectin repeats span residues 1572–1609 (RRSL…PGTA), 1610–1647 (LVLL…KETY), 1648–1685 (MKLL…RDHG), 1686–1723 (IRLL…EEMN), and 1727–1761 (SDPS…PETG). Residues 1580-6545 (FIAGVLIQDT…PETGLLFLSL (4966 aa)) form an interaction with KRT5 region. Residues 1819–1851 (RKLLREYRAQNIGLENLLEVITSTVEETEKQSQ) adopt a coiled-coil conformation. Plectin repeat units lie at residues 1898–1935 (RVYL…AGFA), 1936–1973 (AQML…EDLR), 1974–2011 (ERLV…REEA), 2012–2049 (LRLL…DDSL), 2225–2267 (KRYL…PGTA), 2268–2305 (LVLL…GEIQ), 2306–2343 (EKLL…RDHG), 2344–2381 (IRLL…EDMN), and 2385–2419 (ADPG…PETG). Residues S2430 and S2508 each carry the phosphoserine modification. The segment at 2578 to 2626 (AEETQESKPKPRDASLKQQDTGARGSGTSPDEGDAQDSSESARQQQEQT) is disordered. Residues 2582–2592 (QESKPKPRDAS) show a composition bias toward basic and acidic residues. Composition is skewed to polar residues over residues 2593-2606 (LKQQ…SGTS) and 2615-2626 (SSESARQQQEQT). Plectin repeat units follow at residues 2740–2782 (KRYL…PGTA), 2783–2820 (LVLL…GEIQ), 2821–2858 (EKLL…RDHG), 2859–2896 (IRLL…EDMN), and 2900–2934 (ADPG…PETG). The tract at residues 2748–2940 (CIAGVLVPVQ…PETGFYMLQL (193 aa)) is interaction with KRT14. The interval 3093–3144 (AEETQESKPKPRDASLKQQDTGARGSGTSPDEGDAQDSSESARQQQEQTLRA) is disordered. Over residues 3097–3107 (QESKPKPRDAS) the composition is skewed to basic and acidic residues. 2 stretches are compositionally biased toward polar residues: residues 3108–3121 (LKQQ…SGTS) and 3130–3144 (SSES…TLRA). S3220 is modified (phosphoserine). 5 Plectin repeats span residues 3255–3297 (KRYL…PGTA), 3298–3335 (LVLL…GEIQ), 3336–3373 (EKLL…RDHG), 3374–3411 (IRLL…EDMN), and 3415–3449 (ADPG…PETG). A phosphoserine mark is found at S3460 and S3538. The disordered stretch occupies residues 3608–3659 (AEETQESKPKPRDASLKQQDTGARGSGTSPDEGDAQDSSESARQQQEQTLRA). The segment covering 3612–3622 (QESKPKPRDAS) has biased composition (basic and acidic residues). Composition is skewed to polar residues over residues 3623–3636 (LKQQ…SGTS) and 3645–3659 (SSES…TLRA). The residue at position 3735 (S3735) is a Phosphoserine. 5 Plectin repeats span residues 3770–3812 (KRYL…PGTA), 3813–3850 (LVLL…GEIQ), 3851–3888 (EKLL…RDHG), 3889–3926 (IRLL…EDMN), and 3930–3964 (ADPG…PETG). Phosphoserine is present on residues S3975 and S4053. Residues 4123–4174 (AEETQESKPKPRDASLKQQDTGARGSGTSPDEGDAQDSSESARQQQEQTLRA) form a disordered region. Over residues 4127-4137 (QESKPKPRDAS) the composition is skewed to basic and acidic residues. Polar residues-rich tracts occupy residues 4138 to 4151 (LKQQ…SGTS) and 4160 to 4174 (SSES…TLRA). Plectin repeat units lie at residues 4285 to 4327 (KRYL…PGTA), 4328 to 4365 (LVLL…GEIQ), 4366 to 4403 (EKLL…RDHG), 4404 to 4441 (IRLL…EDMN), and 4445 to 4479 (ADPG…PETG). The interval 4638–4689 (AEETQESKPKPRDASLKQQDTGARGSGTSPDEGDAQDSSESARQQQEQTLRA) is disordered. Over residues 4642 to 4652 (QESKPKPRDAS) the composition is skewed to basic and acidic residues. 2 stretches are compositionally biased toward polar residues: residues 4653–4666 (LKQQ…SGTS) and 4675–4689 (SSES…TLRA). S4765 is modified (phosphoserine). Plectin repeat units follow at residues 4800-4842 (KRYL…PGTA), 4843-4880 (LVLL…GEIQ), 4881-4918 (EKLL…RDHG), 4919-4956 (IRLL…EDMN), and 4960-4994 (ADPG…PETG). Phosphoserine is present on residues S5005 and S5083. The interval 5153 to 5204 (AEETQESKPKPRDASLKQQDTGARGSGTSPDEGDAQDSSESARQQQEQTLRA) is disordered. Basic and acidic residues predominate over residues 5157–5167 (QESKPKPRDAS). Polar residues-rich tracts occupy residues 5168–5181 (LKQQ…SGTS) and 5190–5204 (SSES…TLRA). Plectin repeat units follow at residues 5315–5357 (KRYL…PGTA), 5358–5395 (LVLL…GEIQ), 5396–5433 (EKLL…RDHG), 5434–5471 (IRLL…EDMN), and 5475–5509 (ADPG…PETG). The interval 5668–5719 (AEETQESKPKPRDASLKQQDTGARGSGTSPDEGDAQDSSESARQQQEQTLRA) is disordered. A compositionally biased stretch (basic and acidic residues) spans 5672–5682 (QESKPKPRDAS). Composition is skewed to polar residues over residues 5683–5696 (LKQQ…SGTS) and 5705–5719 (SSES…TLRA). Position 5795 is a phosphoserine (S5795). Plectin repeat units lie at residues 5830–5872 (KRYL…PGTA), 5873–5910 (LVLL…GEIQ), 5911–5948 (EKLL…RDHG), 5949–5986 (IRLL…EDMN), and 5990–6024 (ADPG…PETG). Phosphoserine occurs at positions 6035 and 6113. Residues 6183–6234 (AEETQESKPKPRDASLKQQDTGARGSGTSPDEGDAQDSSESARQQQEQTLRA) form a disordered region. Positions 6187 to 6197 (QESKPKPRDAS) are enriched in basic and acidic residues. Composition is skewed to polar residues over residues 6198–6211 (LKQQ…SGTS) and 6220–6234 (SSES…TLRA). At S6310 the chain carries Phosphoserine. Plectin repeat units follow at residues 6345 to 6387 (KRYL…PGTA), 6388 to 6425 (LVLL…GEIQ), 6426 to 6463 (EKLL…KNHG), 6464 to 6501 (IRLL…QEMN), and 6505 to 6539 (ADPG…PETG).

It belongs to the plakin or cytolinker family. Interacts with KRT5, KRT14 and KRT5/KRT14 heterotetramer; interacts preferentially with assembled filaments rather than keratin monomers. Interacts with KRT8 and KRT18 and KRT8/KRT18 heterotetramer; interacts preferentially with assembled filaments rather than keratin monomers. Interacts with KRT1, VIM and DES; interaction is stronger with KRT1 than with VIM or DES; interaction is dependent of higher-order structure of intermediate filament. High levels in skin, small intestine and salivary gland. Lower levels in lung, uterus and liver. Not detected in brain, kidney, muscle, heart or spleen. In skin, expressed in all epidermal layers but not in the dermis. In intestine, expressed exclusively in the epithelial cell layer of the villi. In liver, expressed at hepatocyte margins. Around the region of the wound, expressed in the upper half of the epidermis. Weakly expressed on the basilar side of the suprabasal layer of the epidermis at the wound's edge. Expressed strongly in the upper layer of the epidermis, especially in larger keratinocytes. Expressed in undifferentiated primary keratinocytes. Strongly expressed in ductal cells, and also expressed in acinar cells. Expressed in hepatocytes and cholangiocytes.

Its subcellular location is the cytoplasm. It is found in the cytoskeleton. The protein localises to the apicolateral cell membrane. It localises to the basolateral cell membrane. The protein resides in the cell junction. Its subcellular location is the hemidesmosome. It is found in the tight junction. The protein localises to the cell projection. Functionally, cytoskeletal linker protein that connects to intermediate filaments and controls their reorganization in response to stress. In response to mechanical stress like wound healing, is associated with the machinery for cellular motility by slowing down keratinocyte migration and proliferation and accelerating keratin bundling in proliferating keratinocytes thus contributing to tissue architecture. However in wound healing in corneal epithelium also positively regulates cell differentiation and proliferation and negatively regulates migration thereby controlling corneal epithelium morphogenesis and integrity. In response to cellular stress, plays a role in keratin filament reorganization, probably by protecting keratin filaments against disruption. During liver and pancreas injuries, plays a protective role by chaperoning disease-induced intermediate filament reorganization. This is Epiplakin from Mus musculus (Mouse).